The following is a 677-amino-acid chain: Methionine--tRNA ligase (677 aa).

Residues 15–25 carry the 'HIGH' region motif; it reads PYANGSIHLGH. C146, C149, C159, and C162 together coordinate Zn(2+). The 'KMSKS' region signature appears at 333 to 337; sequence KMSKS. K336 contributes to the ATP binding site. The 103-residue stretch at 575–677 folds into the tRNA-binding domain; that stretch reads DFAKVDLRVA…AGAKPGHQVK (103 aa).

It belongs to the class-I aminoacyl-tRNA synthetase family. MetG type 1 subfamily. Homodimer. Requires Zn(2+) as cofactor.

It localises to the cytoplasm. The catalysed reaction is tRNA(Met) + L-methionine + ATP = L-methionyl-tRNA(Met) + AMP + diphosphate. Is required not only for elongation of protein synthesis but also for the initiation of all mRNA translation through initiator tRNA(fMet) aminoacylation. The sequence is that of Methionine--tRNA ligase (metG) from Escherichia coli (strain K12).